We begin with the raw amino-acid sequence, 148 residues long: Large ribosomal subunit protein bL9 (148 aa).

This sequence belongs to the bacterial ribosomal protein bL9 family.

Its function is as follows. Binds to the 23S rRNA. The polypeptide is Large ribosomal subunit protein bL9 (Bacillus mycoides (strain KBAB4) (Bacillus weihenstephanensis)).